The following is a 267-amino-acid chain: 4-hydroxy-tetrahydrodipicolinate reductase (267 aa).

NAD(+) contacts are provided by residues 9–14 and aspartate 35; that span reads GVSGRM. An NADP(+)-binding site is contributed by arginine 36. Residues 98–100 and 122–125 contribute to the NAD(+) site; these read GTT and APNM. Histidine 155 functions as the Proton donor/acceptor in the catalytic mechanism. Residue histidine 156 coordinates (S)-2,3,4,5-tetrahydrodipicolinate. Catalysis depends on lysine 159, which acts as the Proton donor. A (S)-2,3,4,5-tetrahydrodipicolinate-binding site is contributed by 165–166; it reads GT.

Belongs to the DapB family.

It is found in the cytoplasm. The catalysed reaction is (S)-2,3,4,5-tetrahydrodipicolinate + NAD(+) + H2O = (2S,4S)-4-hydroxy-2,3,4,5-tetrahydrodipicolinate + NADH + H(+). It catalyses the reaction (S)-2,3,4,5-tetrahydrodipicolinate + NADP(+) + H2O = (2S,4S)-4-hydroxy-2,3,4,5-tetrahydrodipicolinate + NADPH + H(+). It participates in amino-acid biosynthesis; L-lysine biosynthesis via DAP pathway; (S)-tetrahydrodipicolinate from L-aspartate: step 4/4. Its function is as follows. Catalyzes the conversion of 4-hydroxy-tetrahydrodipicolinate (HTPA) to tetrahydrodipicolinate. This Thiobacillus denitrificans (strain ATCC 25259 / T1) protein is 4-hydroxy-tetrahydrodipicolinate reductase.